Reading from the N-terminus, the 232-residue chain is A-type ATP synthase subunit D (232 aa).

The protein belongs to the V-ATPase D subunit family. In terms of assembly, has multiple subunits with at least A(3), B(3), C, D, E, F, H, I and proteolipid K(x).

It is found in the cell membrane. Component of the A-type ATP synthase that produces ATP from ADP in the presence of a proton gradient across the membrane. The protein is A-type ATP synthase subunit D of Methanopyrus kandleri (strain AV19 / DSM 6324 / JCM 9639 / NBRC 100938).